Consider the following 56-residue polypeptide: Prokaryotic ubiquitin-like protein UBact (56 aa).

The segment at 1–56 (MPERIVKPMPQDPVTKPGDEGPRTPNVPKPDTERLLERMRRVDPRQAQRYRQRSGE) is disordered. Residues 30 to 46 (PDTERLLERMRRVDPRQ) are compositionally biased toward basic and acidic residues. Glu-56 is covalently cross-linked (Isoglutamyl lysine isopeptide (Glu-Lys) (interchain with K-? in acceptor proteins)).

Belongs to the ubiquitin-like protein UBact family.

In terms of biological role, may function as a protein modifier covalently attached to lysine residues of substrate proteins. This may serve to target the modified proteins for degradation by proteasomes. This Acetithermum autotrophicum protein is Prokaryotic ubiquitin-like protein UBact.